Consider the following 160-residue polypeptide: Dihydrofolate reductase (160 aa).

Residues 1–160 (MLIAIWAMTQ…NVNYYRKKQQ (160 aa)) enclose the DHFR domain. 5–7 (IWA) serves as a coordination point for substrate. Residues 6–7 (WA) and 14–19 (IGNNNT) each bind NADP(+). Glu27 contributes to the substrate binding site. NADP(+) is bound at residue 43-46 (GRKT). Substrate is bound at residue Arg57. Residues 62–65 (LSKD) and 101–106 (CGGKSV) each bind NADP(+). A substrate-binding site is contributed by Ser120.

This sequence belongs to the dihydrofolate reductase family.

It catalyses the reaction (6S)-5,6,7,8-tetrahydrofolate + NADP(+) = 7,8-dihydrofolate + NADPH + H(+). The protein operates within cofactor biosynthesis; tetrahydrofolate biosynthesis; 5,6,7,8-tetrahydrofolate from 7,8-dihydrofolate: step 1/1. Key enzyme in folate metabolism. Catalyzes an essential reaction for de novo glycine and purine synthesis, and for DNA precursor synthesis. This is Dihydrofolate reductase (folA) from Mycoplasma genitalium (strain ATCC 33530 / DSM 19775 / NCTC 10195 / G37) (Mycoplasmoides genitalium).